A 119-amino-acid chain; its full sequence is Integration host factor subunit alpha (119 aa).

Residues 96–119 (INGQQGSGKMNGEASHEQLSAEPE) are disordered.

It belongs to the bacterial histone-like protein family. In terms of assembly, heterodimer of an alpha and a beta chain.

Its function is as follows. This protein is one of the two subunits of integration host factor, a specific DNA-binding protein that functions in genetic recombination as well as in transcriptional and translational control. This Bradyrhizobium sp. (strain BTAi1 / ATCC BAA-1182) protein is Integration host factor subunit alpha.